The chain runs to 353 residues: Melanin-concentrating hormone receptor 1 (353 aa).

The segment at Met-1–Gly-28 is disordered. At Met-1–Ser-45 the chain is on the extracellular side. Polar residues predominate over residues Pro-12 to Ser-26. 3 N-linked (GlcNAc...) asparagine glycosylation sites follow: Asn-13, Asn-16, and Asn-23. A helical transmembrane segment spans residues Val-46–Val-66. The Cytoplasmic portion of the chain corresponds to Lys-67–Asp-79. Residues Ile-80–Ile-100 traverse the membrane as a helical segment. Over His-101–Cys-116 the chain is Extracellular. Cys-116 and Cys-194 form a disulfide bridge. The helical transmembrane segment at Thr-117 to Ile-139 threads the bilayer. Over Asp-140–Thr-161 the chain is Cytoplasmic. A helical membrane pass occupies residues Leu-162–Ala-182. The Extracellular segment spans residues Arg-183–Asp-204. The helical transmembrane segment at Leu-205–Thr-225 threads the bilayer. Over Ala-226–Arg-256 the chain is Cytoplasmic. A helical membrane pass occupies residues Thr-257–Leu-277. At Thr-278–Asn-294 the chain is on the extracellular side. The helical transmembrane segment at Ala-295–Cys-315 threads the bilayer. Residues Glu-316–Thr-353 lie on the Cytoplasmic side of the membrane.

This sequence belongs to the G-protein coupled receptor 1 family. In terms of assembly, interacts with NCDN.

The protein localises to the cell membrane. Functionally, receptor for melanin-concentrating hormone, coupled to both G proteins that inhibit adenylyl cyclase and G proteins that activate phosphoinositide hydrolysis. The protein is Melanin-concentrating hormone receptor 1 of Sus scrofa (Pig).